Consider the following 317-residue polypeptide: Apolipoprotein E (317 aa).

The signal sequence occupies residues 1–18; the sequence is MKVLWAALLVTFLAGCQA. 8 tandem repeats follow at residues 80–101, 102–123, 124–145, 146–167, 168–189, 190–211, 212–233, and 234–255. The interval 80-255 is 8 X 22 AA approximate tandem repeats; sequence ALMDETMKEL…RLDEVKEQVA (176 aa). Position 143 is a methionine sulfoxide (M143). S147 carries the post-translational modification Phosphoserine. Residues 158–168 form an LDL and other lipoprotein receptors binding region; sequence HLRKLRKRLLR. 162 to 165 serves as a coordination point for heparin; it reads LRKR. The tract at residues 210–290 is lipid-binding and lipoprotein association; that stretch reads AATVGSLAGQ…SWFEPLVEDM (81 aa). 229-236 lines the heparin pocket; that stretch reads GERLRARM. Residues 266 to 317 are homooligomerization; the sequence is QQIRLQAEAFQARLKSWFEPLVEDMQRQWAGLVEKVQAAVGTSAAPVPSDNH. Positions 278-290 are specificity for association with VLDL; sequence RLKSWFEPLVEDM.

The protein belongs to the apolipoprotein A1/A4/E family. As to quaternary structure, homotetramer. May interact with ABCA1; functionally associated with ABCA1 in the biogenesis of HDLs. May interact with APP/A4 amyloid-beta peptide; the interaction is extremely stable in vitro but its physiological significance is unclear. May interact with MAPT. May interact with MAP2. In the cerebrospinal fluid, interacts with secreted SORL1. Interacts with PMEL; this allows the loading of PMEL luminal fragment on ILVs to induce fibril nucleation. In terms of processing, APOE exists as multiple glycosylated and sialylated glycoforms within cells and in plasma. The extent of glycosylation and sialylation are tissue and context specific. Glycated in plasma VLDL. Post-translationally, phosphorylated by FAM20C in the extracellular medium.

Its subcellular location is the secreted. It localises to the extracellular space. The protein resides in the extracellular matrix. The protein localises to the extracellular vesicle. It is found in the endosome. Its subcellular location is the multivesicular body. Functionally, APOE is an apolipoprotein, a protein associating with lipid particles, that mainly functions in lipoprotein-mediated lipid transport between organs via the plasma and interstitial fluids. APOE is a core component of plasma lipoproteins and is involved in their production, conversion and clearance. Apolipoproteins are amphipathic molecules that interact both with lipids of the lipoprotein particle core and the aqueous environment of the plasma. As such, APOE associates with chylomicrons, chylomicron remnants, very low density lipoproteins (VLDL) and intermediate density lipoproteins (IDL) but shows a preferential binding to high-density lipoproteins (HDL). It also binds a wide range of cellular receptors including the LDL receptor/LDLR, the LDL receptor-related proteins LRP1, LRP2 and LRP8 and the very low-density lipoprotein receptor/VLDLR that mediate the cellular uptake of the APOE-containing lipoprotein particles. Finally, APOE also has a heparin-binding activity and binds heparan-sulfate proteoglycans on the surface of cells, a property that supports the capture and the receptor-mediated uptake of APOE-containing lipoproteins by cells. A main function of APOE is to mediate lipoprotein clearance through the uptake of chylomicrons, VLDLs, and HDLs by hepatocytes. APOE is also involved in the biosynthesis by the liver of VLDLs as well as their uptake by peripheral tissues ensuring the delivery of triglycerides and energy storage in muscle, heart and adipose tissues. By participating in the lipoprotein-mediated distribution of lipids among tissues, APOE plays a critical role in plasma and tissues lipid homeostasis. APOE is also involved in two steps of reverse cholesterol transport, the HDLs-mediated transport of cholesterol from peripheral tissues to the liver, and thereby plays an important role in cholesterol homeostasis. First, it is functionally associated with ABCA1 in the biogenesis of HDLs in tissues. Second, it is enriched in circulating HDLs and mediates their uptake by hepatocytes. APOE also plays an important role in lipid transport in the central nervous system, regulating neuron survival and sprouting. The chain is Apolipoprotein E (APOE) from Hylobates lar (Lar gibbon).